Here is a 613-residue protein sequence, read N- to C-terminus: Activating transcription factor 3 (613 aa).

Disordered stretches follow at residues 77-115 (RHFN…PSVQ) and 133-218 (KRKL…NKIA). Positions 85-105 (GQSHSQDSSHSSCSGSPLDSP) are enriched in low complexity. Positions 138–147 (TCDSSSGSEQ) are enriched in polar residues. Over residues 158–175 (NHNGHSGSSNNYSGSMSN) the composition is skewed to low complexity. The segment covering 178–191 (DLDDDCEESSDDDS) has biased composition (acidic residues). Residues 205 to 268 (EDRRRRRRER…QKLVDMLKSH (64 aa)) enclose the bZIP domain. Residues 207–229 (RRRRRRERNKIAATKCRMKKRER) are basic motif. The interval 233 to 261 (LIKESEVLDTQNVELKNQVRQLETERQKL) is leucine-zipper. A disordered region spans residues 337–446 (PNGYCKPSPS…SSNATSSTTP (110 aa)). Positions 356-368 (QQQQQQQQQQQPQ) are enriched in low complexity. Residues 369-389 (SLNPAGNNVIDQQHANPSPSL) show a composition bias toward polar residues. Residues 402–446 (GSASNHPSHNNNNNNNNSSGASSNTSNNNSNISSHSSNATSSTTP) show a composition bias toward low complexity.

The protein belongs to the bZIP family. ATF subfamily. Interacts with Jra/jun; the interaction enhances the DNA-binding activity of Atf3. As to expression, moderate expression in some regions of the larval nervous system, the ring gland and imaginal disks. High expression in larval gut, excretory malpighian tubules, salivary glands, and, to a lesser extent, the fat body where levels are approximately 2.5-fold less than the gut.

The protein resides in the nucleus. Functionally, transcription factor which binds to the cAMP response element (CRE). Regulates metabolic and innate immune homeostasis, possibly by controlling appropriate expression of genes involved in peritrophic matrix composition and ensuring the normal digestive and immune function of the gut. Required for the expression of odorant receptors Or43b and Or47b. This chain is Activating transcription factor 3, found in Drosophila melanogaster (Fruit fly).